Consider the following 767-residue polypeptide: Photosystem I P700 chlorophyll a apoprotein A1 (767 aa).

Positions 1-22 are disordered; that stretch reads MTISPPESGEKDKKILESPVKA. Residues 8–22 show a composition bias toward basic and acidic residues; it reads SGEKDKKILESPVKA. Transmembrane regions (helical) follow at residues 76-99, 162-185, 201-225, 309-327, 368-391, 407-433, 455-477, and 558-576; these read IFSA…FHGA, LMAL…FHYH, LNHH…HIGA, VSHH…GHMY, RHAQ…HHMY, LGLF…IAMV, ALIS…LYIH, and LMIH…LILL. Residues C600 and C609 each coordinate [4Fe-4S] cluster. The next 2 helical transmembrane spans lie at 616 to 637 and 681 to 703; these read HVFL…HFSW and ISMY…MFLF. H692 serves as a coordination point for divinylchlorophyll a'. The divinyl chlorophyll a site is built by M700 and Y708. W709 contacts phylloquinone. A helical membrane pass occupies residues 741 to 761; the sequence is AVGVTHFLVGGIATTWAFFHA.

It belongs to the PsaA/PsaB family. In terms of assembly, the PsaA/B heterodimer binds the P700 divinyl chlorophyll special pair and subsequent electron acceptors. PSI consists of a core antenna complex that captures photons, and an electron transfer chain that converts photonic excitation into a charge separation. The cyanobacterial PSI reaction center is composed of one copy each of PsaA,B,C,D,E,F,I,J,K,L,M and X, and forms trimeric complexes. PSI electron transfer chain: 5 divinyl chlorophyll a, 1 divinyl chlorophyll a', 2 phylloquinones and 3 4Fe-4S clusters. PSI core antenna: 90 divinyl chlorophyll a, 22 carotenoids, 3 phospholipids and 1 galactolipid. P700 is a divinyl chlorophyll a/divinyl chlorophyll a' dimer, A0 is one or more divinyl chlorophyll a, A1 is one or both phylloquinones and FX is a shared 4Fe-4S iron-sulfur center. is required as a cofactor.

It localises to the cellular thylakoid membrane. It carries out the reaction reduced [plastocyanin] + hnu + oxidized [2Fe-2S]-[ferredoxin] = oxidized [plastocyanin] + reduced [2Fe-2S]-[ferredoxin]. PsaA and PsaB bind P700, the primary electron donor of photosystem I (PSI), as well as the electron acceptors A0, A1 and FX. PSI is a plastocyanin/cytochrome c6-ferredoxin oxidoreductase, converting photonic excitation into a charge separation, which transfers an electron from the donor P700 chlorophyll pair to the spectroscopically characterized acceptors A0, A1, FX, FA and FB in turn. Oxidized P700 is reduced on the lumenal side of the thylakoid membrane by plastocyanin or cytochrome c6. The chain is Photosystem I P700 chlorophyll a apoprotein A1 from Prochlorococcus marinus subsp. pastoris (strain CCMP1986 / NIES-2087 / MED4).